We begin with the raw amino-acid sequence, 755 residues long: 17S U2 SnRNP complex component HTATSF1 (755 aa).

Disordered regions lie at residues 1-53 and 81-122; these read MSGT…YEWD and GASS…KAES. Position 2 is an N-acetylserine (serine 2). The segment covering 90-122 has biased composition (basic and acidic residues); that stretch reads EDVHARTAEEPPQEKAPEPTDARKKGEKRKAES. RRM domains lie at 133–218 and 264–349; these read TNVY…VAKF and RVVI…AWDG. The segment at 259–353 is U2AF homology motif (UHM); that stretch reads RMRHERVVII…AQAWDGTTDY (95 aa). N6-acetyllysine is present on lysine 297. The tract at residues 380-415 is disordered; sequence RGLRRSDSVSASERAGPSRARHFSEHPSTSKMNAQE. The tract at residues 381–755 is mediates interaction with the P-TEFb complex; that stretch reads GLRRSDSVSA…LSSDDDDDDI (375 aa). 4 positions are modified to phosphoserine: serine 387, serine 403, serine 407, and serine 409. A compositionally biased stretch (polar residues) spans 405–415; that stretch reads HPSTSKMNAQE. Residues lysine 429 and lysine 430 each participate in a glycyl lysine isopeptide (Lys-Gly) (interchain with G-Cter in SUMO2) cross-link. The segment at 433–755 is disordered; the sequence is KTEDGGEFEE…LSSDDDDDDI (323 aa). A phosphoserine mark is found at serine 445, serine 452, and serine 453. Positions 462–476 are enriched in basic and acidic residues; it reads CPEKESEEGCPKRGF. A phosphoserine mark is found at serine 481, serine 485, serine 494, serine 498, serine 521, and serine 529. Basic and acidic residues predominate over residues 508–538; it reads LKNDCEENGLAKESEDDLNKESEEEVGPTKE. Over residues 539–552 the composition is skewed to acidic residues; it reads SEEDDSEKESDEDC. The span at 553–563 shows a compositional bias: basic and acidic residues; sequence SEKQSEDGSER. 3 positions are modified to phosphoserine: serine 557, serine 561, and serine 579. Residues 564–579 are compositionally biased toward acidic residues; sequence EFEENGLEKDLDEEGS. Over residues 580-590 the composition is skewed to basic and acidic residues; sequence EKELHENVLDK. Positions 591–606 are enriched in acidic residues; the sequence is ELEENDSENSEFEDDG. Phosphoserine is present on residues serine 597, serine 600, serine 607, serine 616, and serine 624. 2 stretches are compositionally biased toward acidic residues: residues 613 to 633 and 640 to 651; these read EEGSEREFDEDSDEKEEEEDT and DESDEKEDEEYA. Threonine 633 bears the Phosphothreonine mark. At serine 642 the chain carries Phosphoserine. Positions 652-674 are enriched in basic and acidic residues; that stretch reads DEKGLEAADKKAEEGDADEKLFE. The segment covering 675–713 has biased composition (acidic residues); sequence ESDDKEDEDADGKEVEDADEKLFEDDDSNEKLFDEEEDS. Residues serine 676, serine 702, serine 713, serine 714, and serine 721 each carry the phosphoserine modification. The span at 714–725 shows a compositional bias: basic and acidic residues; the sequence is SEKLFDDSDERG. Residue serine 748 is modified to Phosphoserine; by CK2.

The protein belongs to the HTATSF1 family. Component of the 17S U2 SnRNP complex, a ribonucleoprotein complex that contains small nuclear RNA (snRNA) U2 and a number of specific proteins. Within the 17S U2 SnRNP complex, interacts (via UHM region) directly with SF3B1. Component of a complex which is at least composed of HTATSF1/Tat-SF1, the P-TEFb complex components CDK9 and CCNT1, RNA polymerase II, SUPT5H, and NCL/nucleolin. Interacts with GTF2F2/RAP30 and POLR2A. Interacts with TCERG1/CA150. Interacts with (poly-ADP-ribosylated) RPA1; promoting HTATSF1 recruitment to DNA damage sites. Interacts (when phosphorylated) with TOPBP1; promoting recruitment of TOPBP1 to DNA damage sites during S-phase. Phosphorylation at Ser-748 by CK2 during S-phase in response to DNA damage promotes interaction with TOPBP1 and double-strand break (DSB) repair via homologous recombination. In terms of tissue distribution, widely expressed.

It is found in the nucleus. The protein resides in the chromosome. In terms of biological role, component of the 17S U2 SnRNP complex of the spliceosome, a large ribonucleoprotein complex that removes introns from transcribed pre-mRNAs. The 17S U2 SnRNP complex (1) directly participates in early spliceosome assembly and (2) mediates recognition of the intron branch site during pre-mRNA splicing by promoting the selection of the pre-mRNA branch-site adenosine, the nucleophile for the first step of splicing. Within the 17S U2 SnRNP complex, HTATSF1 is required to stabilize the branchpoint-interacting stem loop. HTATSF1 is displaced from the 17S U2 SnRNP complex before the stable addition of the 17S U2 SnRNP complex to the spliceosome, destabilizing the branchpoint-interacting stem loop and allowing to probe intron branch site sequences. Also acts as a regulator of transcriptional elongation, possibly by mediating the reciprocal stimulatory effect of splicing on transcriptional elongation. Involved in double-strand break (DSB) repair via homologous recombination in S-phase by promoting the recruitment of TOPBP1 to DNA damage sites. Mechanistically, HTATSF1 is (1) recruited to DNA damage sites in S-phase via interaction with poly-ADP-ribosylated RPA1 and (2) phosphorylated by CK2, promoting recruitment of TOPBP1, thereby facilitating RAD51 nucleofilaments formation and RPA displacement, followed by homologous recombination. Functionally, (Microbial infection) In case of infection by HIV-1, it is up-regulated by the HIV-1 proteins NEF and gp120, acts as a cofactor required for the Tat-enhanced transcription of the virus. The sequence is that of 17S U2 SnRNP complex component HTATSF1 from Homo sapiens (Human).